Consider the following 69-residue polypeptide: MSQLTELVLLTVFLALFSRAEANPFVYNYEALRIGGLVFTCVLVAGAVTALCWGQCKPKRKHDDDASKI.

The N-terminal stretch at 1 to 22 (MSQLTELVLLTVFLALFSRAEA) is a signal peptide. At 23 to 33 (NPFVYNYEALR) the chain is on the extracellular side. The chain crosses the membrane as a helical span at residues 34 to 54 (IGGLVFTCVLVAGAVTALCWG). Topologically, residues 55-69 (QCKPKRKHDDDASKI) are cytoplasmic.

Belongs to the FXYD family. As to expression, detected in adult gill and in larval skin at 2 days post-fertilization (at protein level). In adult gill, strong expression is found in the basal regions of the secondary lamellae.

The protein localises to the cell membrane. Functionally, may modulate the activity of a sodium/potassium-transporting ATPase. The sequence is that of FXYD domain-containing ion transport regulator 11 from Danio rerio (Zebrafish).